A 415-amino-acid polypeptide reads, in one-letter code: MGSLGAILKHPEDFYPLLKLKIAARHAEKQIPSEPHWAFCYSMLHKVSRSFGLVIQQLGPQLRDAVCIFYLVLRALDTVEDDTSISTEVKVPILMAFHRHIYDNDWHFSCGTKEYKVLMDEFHHVSNAFLDLGSGYKEAIEDITMRMGAGMAKFICKEVETIDDYDEYCHYVAGLVGLGLSKLFHASGAEDLATDSLSNSMGLFLQKTNIIRDYLEDINEIPKSRMFWPRQIWSKYVDKLEDLKYEENSAKAVQCLNDMVTDALVHAEDCLKYMSDLRGPAIFRFCAIPQIMAIGTLALCFNNTQVFRGVVKMRRGLTAKVIDQTKTMSDVYGAFFDFSCLLKSKVDNNDPNATKTLSRLEAIQKICKNSGALTTKRKSYIIENESGYNSTLIIILFIILAILYAYLSSNLPNSL.

2 helical membrane-spanning segments follow: residues 281–301 (AIFR…ALCF) and 392–412 (LIII…SNLP).

This sequence belongs to the phytoene/squalene synthase family. Requires Mg(2+) as cofactor. The cofactor is Mn(2+).

The protein resides in the endoplasmic reticulum membrane. The catalysed reaction is 2 (2E,6E)-farnesyl diphosphate + NADH + H(+) = squalene + 2 diphosphate + NAD(+). It catalyses the reaction 2 (2E,6E)-farnesyl diphosphate + NADPH + H(+) = squalene + 2 diphosphate + NADP(+). The protein operates within terpene metabolism; lanosterol biosynthesis; lanosterol from farnesyl diphosphate: step 1/3. Its function is as follows. Component of the triterpene saponins (e.g. ginsenosides or panaxosides) and phytosterols biosynthetic pathways. Catalyzes the biosynthesis of squalene. This chain is Squalene synthase 11, found in Panax ginseng (Korean ginseng).